Consider the following 93-residue polypeptide: Large ribosomal subunit protein eL29 (93 aa).

A compositionally biased stretch (basic residues) spans 1-31 (MAKSKNHSTHHKNRKDHRNGIKKAVVHKKTS). The segment at 1-33 (MAKSKNHSTHHKNRKDHRNGIKKAVVHKKTSSK) is disordered.

This sequence belongs to the eukaryotic ribosomal protein eL29 family.

The sequence is that of Large ribosomal subunit protein eL29 (rpl29) from Dictyostelium discoideum (Social amoeba).